A 398-amino-acid polypeptide reads, in one-letter code: Gastric triacylglycerol lipase (398 aa).

Positions 1 to 19 (MWLLLTMASLISVLGTTHG) are cleaved as a signal peptide. 2 N-linked (GlcNAc...) asparagine glycosylation sites follow: asparagine 34 and asparagine 99. The AB hydrolase-1 domain maps to 78–377 (PVVFLQHGLL…PFYNHLDFIW (300 aa)). Catalysis depends on serine 172, which acts as the Nucleophile. Cysteine 246 and cysteine 255 form a disulfide bridge. 2 N-linked (GlcNAc...) asparagine glycosylation sites follow: asparagine 271 and asparagine 327. Residues aspartate 343 and histidine 372 each act as charge relay system in the active site.

The protein belongs to the AB hydrolase superfamily. Lipase family.

It is found in the secreted. The enzyme catalyses a triacylglycerol + H2O = a diacylglycerol + a fatty acid + H(+). The catalysed reaction is 1,2,3-tri-(9Z-octadecenoyl)-glycerol + H2O = 1,2-di-(9Z-octadecenoyl)-sn-glycerol + (9Z)-octadecenoate + H(+). It carries out the reaction 1,2,3-trioctanoylglycerol + H2O = 1,2-dioctanoyl-sn-glycerol + octanoate + H(+). Functionally, catalyzes the hydrolysis of triacylglycerols to yield free fatty acids, diacylglycerol, monoacylglycerol, and glycerol. Shows a preferential hydrolysis at the sn-3 position of triacylglycerol. This Homo sapiens (Human) protein is Gastric triacylglycerol lipase (LIPF).